Consider the following 345-residue polypeptide: Cytoskeleton protein RodZ (345 aa).

The Cytoplasmic portion of the chain corresponds to 1-111 (MNTEASQDQT…LGKKHKKRDG (111 aa)). The HTH cro/C1-type domain occupies 19–79 (LRQARESLGL…KLVHLPEDEL (61 aa)). Positions 30 to 49 (QQTVAERLCLKVSTIRDIEE) form a DNA-binding region, H-T-H motif. A helical; Signal-anchor for type II membrane protein transmembrane segment spans residues 112–132 (WLMSFTWLIVLVVLGLTGAWW). Over 133 to 345 (WQNHQAQQAE…RVARLTVCVE (213 aa)) the chain is Periplasmic. The segment at 151–259 (SAQLSQNGGQ…PLPTADAGVS (109 aa)) is disordered. Over residues 188-225 (PLTNHSGSAITNSATTSSVPKTTSTEPVDTANTNTTMH) the composition is skewed to polar residues. Positions 229-241 (AASAAVSPSQVPQ) are enriched in low complexity.

This sequence belongs to the RodZ family.

The protein localises to the cell inner membrane. Cytoskeletal protein that is involved in cell-shape control through regulation of the length of the long axis. This chain is Cytoskeleton protein RodZ, found in Yersinia pestis bv. Antiqua (strain Antiqua).